We begin with the raw amino-acid sequence, 164 residues long: UPF0304 protein HSM_1818 (164 aa).

Belongs to the UPF0304 family.

This Histophilus somni (strain 2336) (Haemophilus somnus) protein is UPF0304 protein HSM_1818.